Consider the following 2194-residue polypeptide: Nucleosome-remodeling factor subunit NURF301-like (2194 aa).

The span at Met-1–His-12 shows a compositional bias: basic residues. Residues Met-1–Phe-137 form a disordered region. Over residues Ala-60–Ser-79 the composition is skewed to basic and acidic residues. Residues Val-80–Thr-93 show a composition bias toward polar residues. The span at Ser-94–Leu-112 shows a compositional bias: basic residues. Residues Asp-118–Phe-137 are compositionally biased toward acidic residues. DDT domains follow at residues Thr-196–Glu-256 and Val-341–Arg-396. Residues Asp-347–Asn-392 form a PHD-type 1 zinc finger. Disordered stretches follow at residues Glu-1091–Asn-1122, Ala-1158–Asn-1255, Thr-1413–Ser-1433, Met-1657–Ser-1701, and Glu-1834–Gly-1888. Positions Arg-1151–Ser-1187 form a coiled coil. Basic and acidic residues predominate over residues Ala-1158 to Arg-1179. Polar residues predominate over residues Thr-1665–Thr-1684. The segment covering Lys-1852 to Glu-1861 has biased composition (basic and acidic residues). 2 DDT domains span residues Ala-1883–Arg-1953 and Ile-1948–Tyr-2014. 2 PHD-type zinc fingers span residues Ile-1899–Glu-1950 and Ala-1959–Glu-2010. Residues Gln-2030–Val-2134 enclose the Bromo domain.

The protein belongs to the BPTF family. As to quaternary structure, part of a nucleosome remodeling factor-like (NURF-like) complex containing nurf-1 and isw-1.

The protein resides in the nucleus. Functionally, histone-binding component of a NURF-like (nucleosome remodeling factor-like) complex, which would catalyze ATP-dependent nucleosome sliding and facilitate transcription of chromatin. Involved in vulval cell fates. The polypeptide is Nucleosome-remodeling factor subunit NURF301-like (nurf-1) (Caenorhabditis elegans).